A 259-amino-acid polypeptide reads, in one-letter code: Probable dihydroorotate dehydrogenase B (NAD(+)), electron transfer subunit (259 aa).

The region spanning 1–89 is the FAD-binding FR-type domain; that stretch reads MLPLNATIVQ…RGPFGKGFSL (89 aa). The [2Fe-2S] cluster site is built by C211, C216, C219, and C229.

This sequence belongs to the PyrK family. In terms of assembly, heterotetramer of 2 PyrK and 2 PyrD type B subunits. Requires [2Fe-2S] cluster as cofactor. FAD is required as a cofactor.

It functions in the pathway pyrimidine metabolism; UMP biosynthesis via de novo pathway; orotate from (S)-dihydroorotate (NAD(+) route): step 1/1. In terms of biological role, responsible for channeling the electrons from the oxidation of dihydroorotate from the FMN redox center in the PyrD type B subunit to the ultimate electron acceptor NAD(+). The chain is Probable dihydroorotate dehydrogenase B (NAD(+)), electron transfer subunit from Methanosarcina barkeri (strain Fusaro / DSM 804).